Here is a 389-residue protein sequence, read N- to C-terminus: Chaperone protein DnaJ (389 aa).

A J domain is found at 6-70; that stretch reads DYYEVLGLAK…QKKAAYDQYG (65 aa). The CR-type zinc-finger motif lies at 142 to 224; it reads GVEKEIKYNR…CHGTGHEKKA (83 aa). Zn(2+)-binding residues include cysteine 155, cysteine 158, cysteine 172, cysteine 175, cysteine 198, cysteine 201, cysteine 212, and cysteine 215. CXXCXGXG motif repeat units lie at residues 155–162, 172–179, 198–205, and 212–219; these read CATCGGNG, CHKCHGSG, CDVCHGTG, and CPTCHGTG.

The protein belongs to the DnaJ family. In terms of assembly, homodimer. The cofactor is Zn(2+).

Its subcellular location is the cytoplasm. Its function is as follows. Participates actively in the response to hyperosmotic and heat shock by preventing the aggregation of stress-denatured proteins and by disaggregating proteins, also in an autonomous, DnaK-independent fashion. Unfolded proteins bind initially to DnaJ; upon interaction with the DnaJ-bound protein, DnaK hydrolyzes its bound ATP, resulting in the formation of a stable complex. GrpE releases ADP from DnaK; ATP binding to DnaK triggers the release of the substrate protein, thus completing the reaction cycle. Several rounds of ATP-dependent interactions between DnaJ, DnaK and GrpE are required for fully efficient folding. Also involved, together with DnaK and GrpE, in the DNA replication of plasmids through activation of initiation proteins. This Enterococcus faecalis (strain ATCC 700802 / V583) protein is Chaperone protein DnaJ.